A 1013-amino-acid chain; its full sequence is EF-hand calcium-binding domain-containing protein 6 (1013 aa).

5 EF-hand domains span residues 20–55, 145–180, 251–286, 287–322, and 352–387; these read KNIKTVMKAFKLIDVNKTGLVRPQELRRVLETFCLK, KSYEKIEKALSAGDPCKGGYVSFNYLKIVLDTFIYQ, DRSASLKKALLIINTKPDGPITREEFRYILNCVAIK, LSDSEFKELMQILDPGDTGVVNTSMFIDLIEENCRM, and RNLQAFYNMLRSYDLGDTGLIGRNNFKKIMHVFCPF. Residues 441–460 form a disordered region; the sequence is QKDEQQQPDLSERTKPTEDK. EF-hand domains lie at 482-517, 589-624, 695-730, 731-766, 812-847, and 917-952; these read QQDPAFKKRFLDFSKEPNGKINVHDFRKILEDTGMP, ESFRDPYSAFFKTDVDRDGIINMHDLHRLLLHLLLN, NRWSDLSKNFLETDNEGNGILRRRDIKNALYGFDIP, LTPREFEKLWARYNTEGKGHITYQEFLQKLGINYSP, DLHQDISKAFTKIDKSKTNYISICKMQKVLEECGCS, and SSQLALSTAFSALDKEDTGFVKATEFGQVLKDFCYK. Ca(2+)-binding residues include Asp-602, Asp-604, Asp-606, and Asp-613. Thr-732 is subject to Phosphothreonine.

As to quaternary structure, microtubule inner protein component of sperm flagellar doublet microtubules. Binds PARK7. Part of a ternary complex containing PARK7, EFCAB6/DJBP and AR.

Its subcellular location is the nucleus. The protein localises to the cytoplasm. The protein resides in the cytoskeleton. It is found in the flagellum axoneme. Functionally, negatively regulates the androgen receptor by recruiting histone deacetylase complex, and protein DJ-1 antagonizes this inhibition by abrogation of this complex. Microtubule inner protein (MIP) part of the dynein-decorated doublet microtubules (DMTs) in cilia axoneme, which is required for motile cilia beating. This is EF-hand calcium-binding domain-containing protein 6 (EFCAB6) from Pongo abelii (Sumatran orangutan).